We begin with the raw amino-acid sequence, 216 residues long: MSCLPALDKFLQNYHQAYLTSLGELPRYYPQGEASVCIQGEFHADLDQAVSWQPVKREVEGSFANVEHALELTLWPEINHFYGQYFSAPLLFDSEWGTGELLQVWNEDDFTCLQQNLIGHLMMKKKLKQPPTWFIGLLDEGDKMLTINNSDGSVWIELPGEIPTQQLSPSLAEFIGALSPRIAPPVKHEELPMPALEHPGIFASFKRMWQNLFGKR.

The protein belongs to the Syd family.

The protein localises to the cell inner membrane. In terms of biological role, interacts with the SecY protein in vivo. May bind preferentially to an uncomplexed state of SecY, thus functioning either as a chelating agent for excess SecY in the cell or as a regulatory factor that negatively controls the translocase function. This chain is Protein Syd, found in Shewanella baltica (strain OS223).